The sequence spans 154 residues: Deoxyuridine 5'-triphosphate nucleotidohydrolase (154 aa).

Substrate-binding positions include 68-70 (RSG), Asn81, and 85-87 (TID).

Belongs to the dUTPase family. It depends on Mg(2+) as a cofactor.

It catalyses the reaction dUTP + H2O = dUMP + diphosphate + H(+). The protein operates within pyrimidine metabolism; dUMP biosynthesis; dUMP from dCTP (dUTP route): step 2/2. This enzyme is involved in nucleotide metabolism: it produces dUMP, the immediate precursor of thymidine nucleotides and it decreases the intracellular concentration of dUTP so that uracil cannot be incorporated into DNA. The sequence is that of Deoxyuridine 5'-triphosphate nucleotidohydrolase from Acidiphilium cryptum (strain JF-5).